The primary structure comprises 120 residues: MSNVAYKSNLEPNRVHREAEQPKKQILKRGQMTLGEKVIITIALAIVLVVAFRIISVQAQIYTVNQEIQTKETKILEQQKSNEDLKVEVKDLGRYERILKIAKEKGLKLDGDNVKVVDGQ.

Positions 1-22 are disordered; that stretch reads MSNVAYKSNLEPNRVHREAEQP. Topologically, residues 1-37 are cytoplasmic; that stretch reads MSNVAYKSNLEPNRVHREAEQPKKQILKRGQMTLGEK. Over residues 13–22 the composition is skewed to basic and acidic residues; the sequence is NRVHREAEQP. The chain crosses the membrane as a helical span at residues 38 to 58; the sequence is VIITIALAIVLVVAFRIISVQ. The Extracellular portion of the chain corresponds to 59 to 120; that stretch reads AQIYTVNQEI…GDNVKVVDGQ (62 aa).

The protein belongs to the FtsL family.

The protein localises to the cell membrane. Its function is as follows. Essential cell division protein. The polypeptide is Cell division protein FtsL (Listeria monocytogenes serovar 1/2a (strain ATCC BAA-679 / EGD-e)).